Here is a 688-residue protein sequence, read N- to C-terminus: Lipase (688 aa).

The first 35 residues, 1–35 (MKTRQNKYSIRKFSVGASSILIAALLFMGGGSAQA), serve as a signal peptide directing secretion. Residues 31-309 (GSAQAAEQQQ…KSAKQKQYKN (279 aa)) are disordered. Positions 36–302 (AEQQQDKGTV…KNEDQTNKSA (267 aa)) are cleaved as a propeptide — removed in mature form. The span at 45–54 (VENSTTQSIG) shows a compositional bias: polar residues. 2 stretches are compositionally biased toward basic and acidic residues: residues 84–95 (ESLHNETPKNED) and 103–143 (SQND…KHAS). 2 stretches are compositionally biased toward polar residues: residues 144-175 (ENNQTLHSKAAQSNEDVKTKPSQLDNTTAQQE) and 184-211 (KQDTQSSKTTDLLRATGQNQSKDSQSTE). Residues 227–268 (KNDDDKVETFNLNSKEEPLKVDKQANPTTDKDKSSKNDKGSH) show a composition bias toward basic and acidic residues. The segment covering 274 to 289 (LESNAVATTNKQSKQQ) has biased composition (polar residues). S418 functions as the Nucleophile in the catalytic mechanism. D609 functions as the Charge relay system in the catalytic mechanism. Position 647 (D647) interacts with Ca(2+). The Charge relay system role is filled by H648. The Ca(2+) site is built by D650, D655, and D658.

The protein belongs to the AB hydrolase superfamily. Lipase family.

It is found in the secreted. The enzyme catalyses a triacylglycerol + H2O = a diacylglycerol + a fatty acid + H(+). This Staphylococcus epidermidis (strain ATCC 35984 / DSM 28319 / BCRC 17069 / CCUG 31568 / BM 3577 / RP62A) protein is Lipase (lip).